A 111-amino-acid chain; its full sequence is MAFTEITPERAWDMIQTENAVLLDVRDAERFSYSRAQGAFHLTNQSYGEFQDTYDFDHPVIVSCYHGISSRSIAAFLAEQGYDNVYSVIGGFEGWQRAGLPMETAYGVKPI.

The Rhodanese domain occupies 16-104 (QTENAVLLDV…WQRAGLPMET (89 aa)). C64 (cysteine persulfide intermediate) is an active-site residue.

Belongs to the GlpE family.

The protein resides in the cytoplasm. It carries out the reaction thiosulfate + hydrogen cyanide = thiocyanate + sulfite + 2 H(+). The enzyme catalyses thiosulfate + [thioredoxin]-dithiol = [thioredoxin]-disulfide + hydrogen sulfide + sulfite + 2 H(+). In terms of biological role, transferase that catalyzes the transfer of sulfur from thiosulfate to thiophilic acceptors such as cyanide or dithiols. May function in a CysM-independent thiosulfate assimilation pathway by catalyzing the conversion of thiosulfate to sulfite, which can then be used for L-cysteine biosynthesis. The sequence is that of Thiosulfate sulfurtransferase GlpE from Actinobacillus succinogenes (strain ATCC 55618 / DSM 22257 / CCUG 43843 / 130Z).